The sequence spans 303 residues: Probable 5-dehydro-4-deoxyglucarate dehydratase (303 aa).

It belongs to the DapA family.

It carries out the reaction 5-dehydro-4-deoxy-D-glucarate + H(+) = 2,5-dioxopentanoate + CO2 + H2O. The protein operates within carbohydrate acid metabolism; D-glucarate degradation; 2,5-dioxopentanoate from D-glucarate: step 2/2. The polypeptide is Probable 5-dehydro-4-deoxyglucarate dehydratase (Acinetobacter baumannii (strain SDF)).